The primary structure comprises 991 residues: MTVGKRKLSNGTVNEAKRLDDHVPVVAPSTNPDFENANGEDNEDIDDYSSEGEMSPQLENYFPQTTSWQKTITKVVKSVVSIQFSHVSNFDTESSAVSEATGFVVDSERGYILTNRHVVGPGPFCGYVVFDNHEEAVVRPIYRDPIHDFGFLQFDPKDIRYMKIEQLDLRPDLAQVGTEIRVVGNDAGEKLSILAGFISRLDRNAPDYGTLSYNDFNTEYIQAAASASGGSSGSPVVNKEGYAVALQAGGSTEASTDFFLPVYRPLRALQCIQQGQTITRGDIQVEWQLKPFDECRRLGLTPEAEAAARSQFPDKIGLLVAELVLPEGPADGKLKEGDTLISINGTPIASFISVDEILDEQVGQSLKFVIQRNGHEVSFDIVVGDLHSITPSRYVDIAGASFNDLSYQVARCFCIPVRGVFINDGSGSFELSPFEKNGWLLEYVDDKPTPNLDAFVEVMKSIPDRKKVSISYRHVSDFHTENITVIYVERHWQSTFRMAVRNDSTGIWDFTDIQDKPLPAEEPVPQNAKYIDIPFDDPEKSGCSQLTRSFVQVRTIAPVPVDSYPYRREIGYGVVVDAANGYVLVSRRFVPHDMCDIFVIFAESVELPGKVVFLHPNQNYAIVKYDPKLMLADVKTPKFSDKPLKRGERAFFVGYNYNLRVVTDDVKVSSVSSINVPVASLSPRYRGTNLECILLDSKLSQECDSGVLADYDGTLRAFWITYLGETNCDQTNDRVYRMGLDVTDVMSVIKSLHENKVPAGLRILDAEFASMTIFQGRLRGVPQEWISKFEEVCEDEMKFLAVDRVSAPALGQVATPLKTGDIVMSVNGSIVKTMRDLGIMYNQDSLDFVVIRQKKELHLNVPTIDTSTLNTSHVVFWCGSILQAPHHGVRQLIEKIPSEIYVTKKNSGGPANQYGIATNSFITHVNDTETKTLESFVSVVKGIPDNTYIKLRLVSFDSIPVAISVKTNYHYFPTFELKKVNGEWEETEHKV.

The interval 1–57 (MTVGKRKLSNGTVNEAKRLDDHVPVVAPSTNPDFENANGEDNEDIDDYSSEGEMSPQ) is disordered. Residues 38–50 (NGEDNEDIDDYSS) show a composition bias toward acidic residues. The serine protease stretch occupies residues 86–269 (HVSNFDTESS…LPVYRPLRAL (184 aa)). Residues His-117, Asp-148, and Ser-231 each act as charge relay system in the active site. PDZ domains lie at 296-374 (RRLG…QRNG) and 885-957 (PHHG…VSFD).

Belongs to the peptidase S1C family.

The protein resides in the nucleus. In terms of biological role, nuclear serine protease which mediates apoptosis. The polypeptide is Pro-apoptotic serine protease NMA111 (NMA111) (Meyerozyma guilliermondii (strain ATCC 6260 / CBS 566 / DSM 6381 / JCM 1539 / NBRC 10279 / NRRL Y-324) (Yeast)).